Consider the following 400-residue polypeptide: Argininosuccinate synthase (400 aa).

Residue 8–16 (AYSGGLDTS) participates in ATP binding. An L-citrulline-binding site is contributed by Tyr-87. Position 117 (Gly-117) interacts with ATP. Positions 119, 123, and 124 each coordinate L-aspartate. Asn-123 is an L-citrulline binding site. L-citrulline contacts are provided by Arg-127, Ser-175, Glu-260, and Tyr-272.

It belongs to the argininosuccinate synthase family. Type 1 subfamily. Homotetramer.

The protein localises to the cytoplasm. It catalyses the reaction L-citrulline + L-aspartate + ATP = 2-(N(omega)-L-arginino)succinate + AMP + diphosphate + H(+). It functions in the pathway amino-acid biosynthesis; L-arginine biosynthesis; L-arginine from L-ornithine and carbamoyl phosphate: step 2/3. The polypeptide is Argininosuccinate synthase (Nocardia farcinica (strain IFM 10152)).